Consider the following 160-residue polypeptide: Zinc finger A20 and AN1 domain-containing stress-associated protein 6 (160 aa).

The segment at Pro18–Thr52 adopts an A20-type zinc-finger fold. Residues Cys24, Cys28, Cys40, and Cys43 each coordinate Zn(2+). The tract at residues Glu73–Pro94 is disordered. The AN1-type zinc-finger motif lies at Lys95–Gly141. Zn(2+) is bound by residues Cys101, Cys104, Cys115, Cys117, Cys122, His125, His131, and Cys133.

Its function is as follows. May be involved in environmental stress response. The protein is Zinc finger A20 and AN1 domain-containing stress-associated protein 6 (SAP6) of Oryza sativa subsp. japonica (Rice).